We begin with the raw amino-acid sequence, 234 residues long: Leucyl/phenylalanyl-tRNA--protein transferase (234 aa).

Belongs to the L/F-transferase family.

The protein localises to the cytoplasm. The enzyme catalyses N-terminal L-lysyl-[protein] + L-leucyl-tRNA(Leu) = N-terminal L-leucyl-L-lysyl-[protein] + tRNA(Leu) + H(+). It carries out the reaction N-terminal L-arginyl-[protein] + L-leucyl-tRNA(Leu) = N-terminal L-leucyl-L-arginyl-[protein] + tRNA(Leu) + H(+). The catalysed reaction is L-phenylalanyl-tRNA(Phe) + an N-terminal L-alpha-aminoacyl-[protein] = an N-terminal L-phenylalanyl-L-alpha-aminoacyl-[protein] + tRNA(Phe). Its function is as follows. Functions in the N-end rule pathway of protein degradation where it conjugates Leu, Phe and, less efficiently, Met from aminoacyl-tRNAs to the N-termini of proteins containing an N-terminal arginine or lysine. In Shigella flexneri serotype 5b (strain 8401), this protein is Leucyl/phenylalanyl-tRNA--protein transferase.